Reading from the N-terminus, the 140-residue chain is Putative septation protein SpoVG (140 aa).

The interval 88 to 127 (VAPQAGGLQGAEEPTAVEPAPQLQDESELPWEPGDDGEGA) is disordered. A compositionally biased stretch (acidic residues) spans 112–124 (DESELPWEPGDDG).

The protein belongs to the SpoVG family.

In terms of biological role, could be involved in septation. This Symbiobacterium thermophilum (strain DSM 24528 / JCM 14929 / IAM 14863 / T) protein is Putative septation protein SpoVG.